The following is a 134-amino-acid chain: ATP synthase epsilon chain (134 aa).

The segment at 100 to 134 (NQKLQNENLSEEEKEHYEKQRSRSQALLNLASAKV) is disordered. The segment covering 110–120 (EEEKEHYEKQR) has biased composition (basic and acidic residues).

The protein belongs to the ATPase epsilon chain family. In terms of assembly, F-type ATPases have 2 components, CF(1) - the catalytic core - and CF(0) - the membrane proton channel. CF(1) has five subunits: alpha(3), beta(3), gamma(1), delta(1), epsilon(1). CF(0) has three main subunits: a, b and c.

It localises to the cell inner membrane. Produces ATP from ADP in the presence of a proton gradient across the membrane. The protein is ATP synthase epsilon chain of Sulfurihydrogenibium sp. (strain YO3AOP1).